The following is a 349-amino-acid chain: tRNA pseudouridine synthase D (349 aa).

Phenylalanine 27 provides a ligand contact to substrate. The Nucleophile role is filled by aspartate 80. Asparagine 129 contacts substrate. The region spanning 155–303 (GVPNYFGAQR…VEAARRAMLL (149 aa)) is the TRUD domain. Substrate is bound at residue phenylalanine 329.

It belongs to the pseudouridine synthase TruD family.

The enzyme catalyses uridine(13) in tRNA = pseudouridine(13) in tRNA. Responsible for synthesis of pseudouridine from uracil-13 in transfer RNAs. The polypeptide is tRNA pseudouridine synthase D (Escherichia coli O17:K52:H18 (strain UMN026 / ExPEC)).